A 241-amino-acid polypeptide reads, in one-letter code: Large ribosomal subunit protein uL2 (241 aa).

The tract at residues 200-241 (AVDHPHGGGNRQHPGRPTTISRHAPAGRKVGSIAAKRTGKRR) is disordered.

It belongs to the universal ribosomal protein uL2 family. Part of the 50S ribosomal subunit. Forms a bridge to the 30S subunit in the 70S ribosome.

In terms of biological role, one of the primary rRNA binding proteins. Required for association of the 30S and 50S subunits to form the 70S ribosome, for tRNA binding and peptide bond formation. It has been suggested to have peptidyltransferase activity; this is somewhat controversial. Makes several contacts with the 16S rRNA in the 70S ribosome. The protein is Large ribosomal subunit protein uL2 of Methanosphaera stadtmanae (strain ATCC 43021 / DSM 3091 / JCM 11832 / MCB-3).